Reading from the N-terminus, the 324-residue chain is MLEQVMVLAIILSFLITVILSPLFIPFLRRLKFGQSIREEGPKSHQKKTGTPTMGGIMILLSIVVTTLLMTRKFATLSVETYLLLFVTIGYGLLGFLDDFIKVVMKRNLGLTSRQKLIGQLMIAIVFYFVYQRSGFSTALHIPGTDLSINLGFGYVLLLIFMLVGGSNAVNLTDGLDGLLAGTAAIAFGAYAVLAWNQGQYDIAIFCVSVVGAVLGFLVFNAHPAKVFMGDTGSLALGGAIATVAILTKLEILLVIIGGVFVIETLSVIIQVISFKTTGKRVFRMSPLHHHYELIGWSEWRVVVTFWAVGLLFAMLGIYIEVWI.

The next 10 membrane-spanning stretches (helical) occupy residues 5 to 25 (VMVL…PLFI), 50 to 70 (GTPT…TLLM), 77 to 97 (LSVE…LGFL), 117 to 137 (LIGQ…SGFS), 147 to 167 (LSIN…VGGS), 176 to 196 (LDGL…VLAW), 203 to 223 (IAIF…FNAH), 227 to 247 (VFMG…VAIL), 250 to 270 (LEIL…SVII), and 304 to 324 (VTFW…EVWI).

It belongs to the glycosyltransferase 4 family. MraY subfamily. It depends on Mg(2+) as a cofactor.

Its subcellular location is the cell membrane. The catalysed reaction is UDP-N-acetyl-alpha-D-muramoyl-L-alanyl-gamma-D-glutamyl-meso-2,6-diaminopimeloyl-D-alanyl-D-alanine + di-trans,octa-cis-undecaprenyl phosphate = di-trans,octa-cis-undecaprenyl diphospho-N-acetyl-alpha-D-muramoyl-L-alanyl-D-glutamyl-meso-2,6-diaminopimeloyl-D-alanyl-D-alanine + UMP. Its pathway is cell wall biogenesis; peptidoglycan biosynthesis. Functionally, catalyzes the initial step of the lipid cycle reactions in the biosynthesis of the cell wall peptidoglycan: transfers peptidoglycan precursor phospho-MurNAc-pentapeptide from UDP-MurNAc-pentapeptide onto the lipid carrier undecaprenyl phosphate, yielding undecaprenyl-pyrophosphoryl-MurNAc-pentapeptide, known as lipid I. The polypeptide is Phospho-N-acetylmuramoyl-pentapeptide-transferase (Geobacillus sp. (strain WCH70)).